The chain runs to 345 residues: 4-hydroxyproline 2-epimerase 1 (345 aa).

Position 85 (glutamine 85) interacts with substrate. Serine 93 (proton acceptor) is an active-site residue. Substrate contacts are provided by residues 94 to 95 and aspartate 251; that span reads GS. The Proton donor role is filled by cysteine 255. 256 to 257 is a substrate binding site; it reads GT.

The protein belongs to the proline racemase family.

It catalyses the reaction trans-4-hydroxy-L-proline = cis-4-hydroxy-D-proline. Its function is as follows. Catalyzes the epimerization of trans-4-hydroxy-L-proline (t4LHyp) to cis-4-hydroxy-D-proline (c4DHyp). May be involved in a degradation pathway of t4LHyp. Can also catalyze the epimerization of trans-3-hydroxy-L-proline (t3LHyp) to cis-3-hydroxy-D-proline (c3DHyp) in vitro. Displays no proline racemase activity. In Rhizobium rhizogenes (strain K84 / ATCC BAA-868) (Agrobacterium radiobacter), this protein is 4-hydroxyproline 2-epimerase 1.